Here is a 307-residue protein sequence, read N- to C-terminus: GTPase Era (307 aa).

One can recognise an Era-type G domain in the interval 7–181 (RCGWVALMGP…VELIRKKLPK (175 aa)). A G1 region spans residues 15–22 (GPPNAGKS). Residue 15 to 22 (GPPNAGKS) coordinates GTP. Positions 41–45 (QTTRN) are G2. Residues 62 to 65 (DTPG) are G3. Residues 62–66 (DTPGL) and 130–133 (NKVD) each bind GTP. The tract at residues 130 to 133 (NKVD) is G4. The interval 160–162 (ISA) is G5. Positions 212–290 (LRQEVPYSVA…HLELWVKVRE (79 aa)) constitute a KH type-2 domain.

It belongs to the TRAFAC class TrmE-Era-EngA-EngB-Septin-like GTPase superfamily. Era GTPase family. Monomer.

It localises to the cytoplasm. Its subcellular location is the cell inner membrane. An essential GTPase that binds both GDP and GTP, with rapid nucleotide exchange. Plays a role in 16S rRNA processing and 30S ribosomal subunit biogenesis and possibly also in cell cycle regulation and energy metabolism. The polypeptide is GTPase Era (Desulfovibrio desulfuricans (strain ATCC 27774 / DSM 6949 / MB)).